A 964-amino-acid polypeptide reads, in one-letter code: Glycine dehydrogenase (decarboxylating) (964 aa).

Residues 1–10 show a composition bias toward polar residues; that stretch reads MNSTLQNRNR. A disordered region spans residues 1-25; the sequence is MNSTLQNRNRTNLERVSTDPLDTFP. Lysine 713 carries the N6-(pyridoxal phosphate)lysine modification.

This sequence belongs to the GcvP family. In terms of assembly, the glycine cleavage system is composed of four proteins: P, T, L and H. Pyridoxal 5'-phosphate serves as cofactor.

It catalyses the reaction N(6)-[(R)-lipoyl]-L-lysyl-[glycine-cleavage complex H protein] + glycine + H(+) = N(6)-[(R)-S(8)-aminomethyldihydrolipoyl]-L-lysyl-[glycine-cleavage complex H protein] + CO2. In terms of biological role, the glycine cleavage system catalyzes the degradation of glycine. The P protein binds the alpha-amino group of glycine through its pyridoxal phosphate cofactor; CO(2) is released and the remaining methylamine moiety is then transferred to the lipoamide cofactor of the H protein. This is Glycine dehydrogenase (decarboxylating) from Leptospira borgpetersenii serovar Hardjo-bovis (strain JB197).